The following is a 400-amino-acid chain: Nicotinate phosphoribosyltransferase (400 aa).

H220 is modified (phosphohistidine; by autocatalysis).

This sequence belongs to the NAPRTase family. In terms of processing, transiently phosphorylated on a His residue during the reaction cycle. Phosphorylation strongly increases the affinity for substrates and increases the rate of nicotinate D-ribonucleotide production. Dephosphorylation regenerates the low-affinity form of the enzyme, leading to product release.

The enzyme catalyses nicotinate + 5-phospho-alpha-D-ribose 1-diphosphate + ATP + H2O = nicotinate beta-D-ribonucleotide + ADP + phosphate + diphosphate. The protein operates within cofactor biosynthesis; NAD(+) biosynthesis; nicotinate D-ribonucleotide from nicotinate: step 1/1. Catalyzes the synthesis of beta-nicotinate D-ribonucleotide from nicotinate and 5-phospho-D-ribose 1-phosphate at the expense of ATP. The polypeptide is Nicotinate phosphoribosyltransferase (Salmonella agona (strain SL483)).